A 148-amino-acid chain; its full sequence is IQ domain-containing protein F5 (148 aa).

IQ domains follow at residues Glu11–Ile40 and Lys67–Ile96.

The sequence is that of IQ domain-containing protein F5 (Iqcf5) from Mus musculus (Mouse).